Consider the following 446-residue polypeptide: Protein IQ-DOMAIN 19 (446 aa).

Positions 93 to 140 (IPGTPKEKRRWSFRRSSATGPPPPACAITLKDSPPPPPPPPPPPPLQQ) are disordered. Positions 125–139 (SPPPPPPPPPPPPLQ) are enriched in pro residues. IQ domains lie at 163-191 (EEFAAIKIQACYRSHLARKALRALKGLVK) and 192-214 (LQALVRGHLVRKQATATLRCMQA). A calmodulin-binding region spans residues 214–231 (ALITLQAKAREQRIRMIG). Positions 332-345 (QSSKAKARSQSAPK) are enriched in low complexity. The disordered stretch occupies residues 332-398 (QSSKAKARSQ…TAKESQQHHH (67 aa)). Positions 379–392 (QRSSSQLGSNTAKE) are enriched in polar residues.

Belongs to the IQD family. Binds to multiple calmodulin (CaM) in the presence of Ca(2+) and CaM-like proteins.

The protein resides in the cytoplasm. The protein localises to the cytoskeleton. It is found in the cell membrane. In terms of biological role, may be involved in cooperative interactions with calmodulins or calmodulin-like proteins. Recruits calmodulin proteins to microtubules, thus being a potential scaffold in cellular signaling and trafficking. Acts as a positive regulator of trichome branch initiation. May associate with nucleic acids and regulate gene expression at the transcriptional or post-transcriptional level. In Arabidopsis thaliana (Mouse-ear cress), this protein is Protein IQ-DOMAIN 19.